We begin with the raw amino-acid sequence, 258 residues long: MQIIRNNSQDPISISNWRWACFLDETIKAFSTFQTRPYQIDNDFLFRESFFGSSSNPKKVILETWGLKMEKIRQARCACLQAGEITSVMNLVISPLNNYDLPFFGADFVTLPNGHLIALDLQPALKDDINHTQHVWNKLKPIHAHWQSKIPTGGDIPSDARQYFSPAFLWSRIPLGEEGDNLITQTIKPAFDEYLNCFFDLLRDAKITSKERSFQLLNGQKKYMRYRAEKDPARGMLRSFFGEVWTESYINNILFDLK.

This sequence belongs to the HY2 family.

The enzyme catalyses (3Z)-phycoerythrobilin + oxidized 2[4Fe-4S]-[ferredoxin] = 15,16-dihydrobiliverdin + reduced 2[4Fe-4S]-[ferredoxin] + 2 H(+). Catalyzes the two-electron reduction of the C2 and C3(1) diene system of 15,16-dihydrobiliverdin. The protein is Phycoerythrobilin:ferredoxin oxidoreductase of Prochlorococcus marinus (strain NATL1A).